The primary structure comprises 589 residues: C-type lectin domain family 4 member F (589 aa).

At 1 to 39 (MDGEAVRFCTDNQCVSLHPQEVDSVAMAPAAPKIPRLVQ) the chain is on the cytoplasmic side. Residues 40 to 60 (ATPAFMAVTLVFSLVTLFVVV) traverse the membrane as a helical; Signal-anchor for type II membrane protein segment. At 61 to 589 (QQQTRPVPKP…TPPCPWILSN (529 aa)) the chain is on the extracellular side. N-linked (GlcNAc...) asparagine glycans are attached at residues N79, N113, N207, N230, N244, N312, N385, and N399. Residues 476–589 (NGGSLYYFSS…TPPCPWILSN (114 aa)) enclose the C-type lectin domain.

The protein localises to the membrane. In terms of biological role, receptor with an affinity for galactose and fucose. Could be involved in endocytosis. This Homo sapiens (Human) protein is C-type lectin domain family 4 member F (CLEC4F).